The primary structure comprises 272 residues: Dihydropteroate synthase (272 aa).

One can recognise a Pterin-binding domain in the interval 1-256 (MIKTKIMGIL…NVLLNTRLAQ (256 aa)). N11 provides a ligand contact to Mg(2+). (7,8-dihydropterin-6-yl)methyl diphosphate-binding positions include T51, D89, N108, D172, K208, and 244–246 (RVH).

It belongs to the DHPS family. As to quaternary structure, homodimer. The cofactor is Mg(2+).

The catalysed reaction is (7,8-dihydropterin-6-yl)methyl diphosphate + 4-aminobenzoate = 7,8-dihydropteroate + diphosphate. The protein operates within cofactor biosynthesis; tetrahydrofolate biosynthesis; 7,8-dihydrofolate from 2-amino-4-hydroxy-6-hydroxymethyl-7,8-dihydropteridine diphosphate and 4-aminobenzoate: step 1/2. Its function is as follows. Catalyzes the condensation of para-aminobenzoate (pABA) with 6-hydroxymethyl-7,8-dihydropterin diphosphate (DHPt-PP) to form 7,8-dihydropteroate (H2Pte), the immediate precursor of folate derivatives. The polypeptide is Dihydropteroate synthase (folP) (Staphylococcus epidermidis (strain ATCC 12228 / FDA PCI 1200)).